The sequence spans 84 residues: PAMP-induced secreted peptide 2 (84 aa).

A signal peptide spans 1–24 (MMMNKNVLSSILFFMLIGSVLVES). Residues 50 to 84 (KDSGPSPGEGHKVVDRKDTFRFVKHSGPSPSGPGH) form a disordered region. Positions 58–70 (EGHKVVDRKDTFR) are enriched in basic and acidic residues. Residues proline 77 and proline 79 each carry the 4-hydroxyproline modification.

In terms of processing, contains 4-hydroxyproline; hydroxylated on Pro-77 and Pro-79.

It is found in the secreted. The protein localises to the extracellular space. The protein resides in the apoplast. Endogenous secreted peptide that acts as elicitor of immune response and positive regulator of defense response. Amplifies the immune response triggered by flg22, the active epitope of bacterial flagellin. Acts as a negative regulator of root growth. The protein is PAMP-induced secreted peptide 2 of Arabidopsis thaliana (Mouse-ear cress).